Here is a 104-residue protein sequence, read N- to C-terminus: Large ribosomal subunit protein uL24 (104 aa).

It belongs to the universal ribosomal protein uL24 family. As to quaternary structure, part of the 50S ribosomal subunit.

Its function is as follows. One of two assembly initiator proteins, it binds directly to the 5'-end of the 23S rRNA, where it nucleates assembly of the 50S subunit. Functionally, one of the proteins that surrounds the polypeptide exit tunnel on the outside of the subunit. The sequence is that of Large ribosomal subunit protein uL24 from Pectobacterium atrosepticum (strain SCRI 1043 / ATCC BAA-672) (Erwinia carotovora subsp. atroseptica).